We begin with the raw amino-acid sequence, 233 residues long: Nickel import system ATP-binding protein NikE (233 aa).

Residues 2-228 (IELKHVTFGY…DRHPYTKELV (227 aa)) form the ABC transporter domain. 35–42 (GESGCGKS) provides a ligand contact to ATP.

This sequence belongs to the ABC transporter superfamily. The complex is composed of two ATP-binding proteins (NikD and NikE), two transmembrane proteins (NikB and NikC) and a solute-binding protein (NikA).

It is found in the cell membrane. The catalysed reaction is Ni(2+)(out) + ATP + H2O = Ni(2+)(in) + ADP + phosphate + H(+). In terms of biological role, part of the ABC transporter complex NikABCDE (Opp2) involved in nickel import. Probably responsible for energy coupling to the transport system. This chain is Nickel import system ATP-binding protein NikE, found in Staphylococcus aureus (strain MRSA252).